Consider the following 419-residue polypeptide: Protein phosphatase methylesterase 1 (419 aa).

The span at Met-1–Pro-12 shows a compositional bias: basic residues. The tract at residues Met-1–Ala-75 is disordered. Positions Thr-32–Gly-52 are enriched in acidic residues. Active-site residues include Ser-230, Asp-256, and His-383.

The protein belongs to the AB hydrolase superfamily.

It carries out the reaction [phosphatase 2A protein]-C-terminal L-leucine methyl ester + H2O = [phosphatase 2A protein]-C-terminal L-leucine + methanol + H(+). Its function is as follows. Demethylates proteins that have been reversibly carboxymethylated. Demethylates the phosphatase PP2A catalytic subunit. The sequence is that of Protein phosphatase methylesterase 1 (PPE1) from Yarrowia lipolytica (strain CLIB 122 / E 150) (Yeast).